Reading from the N-terminus, the 407-residue chain is Na(+)-translocating NADH-quinone reductase subunit F (407 aa).

A helical membrane pass occupies residues 3-23 (IILGVVMFTLIVLALVLVILF). Positions 32 to 126 (GDITISINGD…DMDIELPEEI (95 aa)) constitute a 2Fe-2S ferredoxin-type domain. [2Fe-2S] cluster contacts are provided by Cys-69, Cys-75, Cys-78, and Cys-110. An FAD-binding FR-type domain is found at 129–269 (VKKWECTVIS…SGPFGEFFAK (141 aa)). The segment at 272-389 (DAEMVFIGGG…PMMNAAVIGM (118 aa)) is catalytic.

Belongs to the NqrF family. In terms of assembly, composed of six subunits; NqrA, NqrB, NqrC, NqrD, NqrE and NqrF. The cofactor is [2Fe-2S] cluster. Requires FAD as cofactor.

It is found in the cell inner membrane. It carries out the reaction a ubiquinone + n Na(+)(in) + NADH + H(+) = a ubiquinol + n Na(+)(out) + NAD(+). Functionally, NQR complex catalyzes the reduction of ubiquinone-1 to ubiquinol by two successive reactions, coupled with the transport of Na(+) ions from the cytoplasm to the periplasm. The first step is catalyzed by NqrF, which accepts electrons from NADH and reduces ubiquinone-1 to ubisemiquinone by a one-electron transfer pathway. This chain is Na(+)-translocating NADH-quinone reductase subunit F, found in Vibrio anguillarum (Listonella anguillarum).